A 93-amino-acid polypeptide reads, in one-letter code: MITEKDVEHIGSLACIDLSPEETGLFAKQFNSILDYFRELDEVNTDGVEPTHHVIGLTNVFREDVAGESLTQEECIANAARKEKGFIKGPRIV.

This sequence belongs to the GatC family. In terms of assembly, heterotrimer of A, B and C subunits.

It carries out the reaction L-glutamyl-tRNA(Gln) + L-glutamine + ATP + H2O = L-glutaminyl-tRNA(Gln) + L-glutamate + ADP + phosphate + H(+). It catalyses the reaction L-aspartyl-tRNA(Asn) + L-glutamine + ATP + H2O = L-asparaginyl-tRNA(Asn) + L-glutamate + ADP + phosphate + 2 H(+). Its function is as follows. Allows the formation of correctly charged Asn-tRNA(Asn) or Gln-tRNA(Gln) through the transamidation of misacylated Asp-tRNA(Asn) or Glu-tRNA(Gln) in organisms which lack either or both of asparaginyl-tRNA or glutaminyl-tRNA synthetases. The reaction takes place in the presence of glutamine and ATP through an activated phospho-Asp-tRNA(Asn) or phospho-Glu-tRNA(Gln). In Methanocella arvoryzae (strain DSM 22066 / NBRC 105507 / MRE50), this protein is Aspartyl/glutamyl-tRNA(Asn/Gln) amidotransferase subunit C.